The chain runs to 477 residues: Prolyl tri/tetrapeptidyl aminopeptidase (477 aa).

The first 27 residues, 1 to 27, serve as a signal peptide directing secretion; that stretch reads MRKALRSLLAASMLIGAIGAGSATAEA. Positions 28 to 33 are excised as a propeptide; that stretch reads ASITAP. Residues 448–477 are disordered; it reads QKDEKAAKPLAPFDAKLDRVKNDKQSALRP. Positions 462 to 477 are enriched in basic and acidic residues; sequence AKLDRVKNDKQSALRP.

Belongs to the peptidase S37 family.

It localises to the secreted. The protein localises to the cell surface. With respect to regulation, completely inhibited by the serine protease inhibitor phenylmethylsulfonyl fluoride. Partially inhibited by the serine protease inhibitor Pefabloc. Not inhibited by cysteine proteinase-specific or metalloproteinase-specific inhibitors. Not inhibited by prolinal or its derivatives. EDTA and EGTA both partially inhibit this enzyme. EDTA has no effect on activity. Functionally, has proline-specific tripeptidyl aminopeptidase and tetrapeptidyl aminopeptidase activity. Activity is highest against tripeptides containing an Ala-Pro motif. Involved in the final processing of transglutaminase, by removing either the tetrapeptide Phe-Arg-Ala-Pro left after TAMEP or SAM-P45 hydrolysis, or the tripeptide Arg-Ala-Pro left after SGMP II hydrolysis in a single step. This is Prolyl tri/tetrapeptidyl aminopeptidase (ptp) from Streptomyces mobaraensis (Streptoverticillium mobaraense).